The following is a 306-amino-acid chain: Glutamyl-Q tRNA(Asp) synthetase (306 aa).

L-glutamate contacts are provided by residues 4–8 (RYAPS) and Glu40. The 'HIGH' region signature appears at 7 to 17 (PSPSGDLHFGN). Residues Cys92, Cys94, Tyr113, and Cys117 each contribute to the Zn(2+) site. Tyr180 and Arg198 together coordinate L-glutamate. The 'KMSKS' region motif lies at 236-240 (RLAKR). Lys239 provides a ligand contact to ATP.

This sequence belongs to the class-I aminoacyl-tRNA synthetase family. GluQ subfamily. The cofactor is Zn(2+).

Its function is as follows. Catalyzes the tRNA-independent activation of glutamate in presence of ATP and the subsequent transfer of glutamate onto a tRNA(Asp). Glutamate is transferred on the 2-amino-5-(4,5-dihydroxy-2-cyclopenten-1-yl) moiety of the queuosine in the wobble position of the QUC anticodon. The chain is Glutamyl-Q tRNA(Asp) synthetase from Corynebacterium efficiens (strain DSM 44549 / YS-314 / AJ 12310 / JCM 11189 / NBRC 100395).